The primary structure comprises 428 residues: Chaperone SurA (428 aa).

An N-terminal signal peptide occupies residues 1–13 (MLGALLLSGAVHA). PpiC domains follow at residues 164 to 265 (SEEF…KLLE) and 276 to 375 (RDEV…EVLG).

It localises to the periplasm. The catalysed reaction is [protein]-peptidylproline (omega=180) = [protein]-peptidylproline (omega=0). In terms of biological role, chaperone involved in the correct folding and assembly of outer membrane proteins. Recognizes specific patterns of aromatic residues and the orientation of their side chains, which are found more frequently in integral outer membrane proteins. May act in both early periplasmic and late outer membrane-associated steps of protein maturation. The protein is Chaperone SurA of Pseudomonas syringae pv. tomato (strain ATCC BAA-871 / DC3000).